A 446-amino-acid chain; its full sequence is Chromosomal replication initiator protein DnaA (446 aa).

The tract at residues 1 to 72 (MENILDLWNQ…ADTIYELTGE (72 aa)) is domain I, interacts with DnaA modulators. The interval 72-109 (EELSVKFVIPQNQDEENFLPKPQVKKAAKEEPSDFPQS) is domain II. Positions 110–326 (MLNPKYTFDT…GALIRVVAYS (217 aa)) are domain III, AAA+ region. The ATP site is built by Gly-154, Gly-156, Lys-157, and Thr-158. The tract at residues 327 to 446 (SLINKDINAD…QVKEIKELLK (120 aa)) is domain IV, binds dsDNA.

Belongs to the DnaA family. As to quaternary structure, oligomerizes as a right-handed, spiral filament on DNA at oriC.

It is found in the cytoplasm. In terms of biological role, plays an essential role in the initiation and regulation of chromosomal replication. ATP-DnaA binds to the origin of replication (oriC) to initiate formation of the DNA replication initiation complex once per cell cycle. Binds the DnaA box (a 9 base pair repeat at the origin) and separates the double-stranded (ds)DNA. Forms a right-handed helical filament on oriC DNA; dsDNA binds to the exterior of the filament while single-stranded (ss)DNA is stabiized in the filament's interior. The ATP-DnaA-oriC complex binds and stabilizes one strand of the AT-rich DNA unwinding element (DUE), permitting loading of DNA polymerase. After initiation quickly degrades to an ADP-DnaA complex that is not apt for DNA replication. Binds acidic phospholipids. The protein is Chromosomal replication initiator protein DnaA of Bacillus velezensis (strain DSM 23117 / BGSC 10A6 / LMG 26770 / FZB42) (Bacillus amyloliquefaciens subsp. plantarum).